The following is a 150-amino-acid chain: MKGIAIFLVFIFYWTTSTLSSFWQFQRMVKHVTGRSAFFSYYGYGCYCGLGGKGLPVDATDRCCWAHDCCYHKLKEYGCQPILNAYQFTIVNGTVTCGCTVASSCPCGQKACECDKQSVYCFKENLATYEKAFKQLFPTRPQCGRDKLQC.

An N-terminal signal peptide occupies residues 1–20; the sequence is MKGIAIFLVFIFYWTTSTLS. 8 disulfides stabilise this stretch: Cys46–Cys143, Cys48–Cys64, Cys63–Cys121, Cys69–Cys150, Cys70–Cys114, Cys79–Cys107, Cys97–Cys112, and Cys99–Cys105. Ca(2+)-binding residues include Tyr47, Gly49, and Gly51. Residue His67 is part of the active site. Position 68 (Asp68) interacts with Ca(2+). Asn92 carries an N-linked (GlcNAc...) asparagine glycan. Residue Asp115 is part of the active site.

It belongs to the phospholipase A2 family. Ca(2+) serves as cofactor. Testis specific.

The protein resides in the secreted. The enzyme catalyses a 1,2-diacyl-sn-glycero-3-phosphocholine + H2O = a 1-acyl-sn-glycero-3-phosphocholine + a fatty acid + H(+). Its function is as follows. PA2 catalyzes the calcium-dependent hydrolysis of the 2-acyl groups in 3-sn-phosphoglycerides. Testis PA2 may be important in the production of prostaglandins, by the release of arachidonic acid, which in turn are necessary for the contractions of the seminiferous tubules and the testicular capsule; they also seem to decrease sperm transit time through the male reproductive tract. The chain is Group IIC secretory phospholipase A2 (Pla2g2c) from Mus musculus (Mouse).